Reading from the N-terminus, the 236-residue chain is MSKTSKAYRAAAEKIDAGRLYTPLAAAKAVKETSSKNFDATVDVAIRLGVDPRKADQLVRGTVSLPNGTGKEVRVVVFAEGPNATAAEEAGADVVGTAELIEKIQGGWTDFDAAIATPDQMAKVGRVARVLGPRGLMPNPKTGTVTTDVAKAVAEIKGGKISFRVDKAANLHAILGKASFTEKQLAENYGALIDELLRLKPSSSKGRYFKKVTMSSTNGPGVPVDNTIVKDFTEEA.

Belongs to the universal ribosomal protein uL1 family. As to quaternary structure, part of the 50S ribosomal subunit.

Its function is as follows. Binds directly to 23S rRNA. The L1 stalk is quite mobile in the ribosome, and is involved in E site tRNA release. Functionally, protein L1 is also a translational repressor protein, it controls the translation of the L11 operon by binding to its mRNA. This is Large ribosomal subunit protein uL1 from Corynebacterium jeikeium (strain K411).